Reading from the N-terminus, the 97-residue chain is Small ribosomal subunit protein bS20 (97 aa).

It belongs to the bacterial ribosomal protein bS20 family.

In terms of biological role, binds directly to 16S ribosomal RNA. This Methylibium petroleiphilum (strain ATCC BAA-1232 / LMG 22953 / PM1) protein is Small ribosomal subunit protein bS20.